A 369-amino-acid chain; its full sequence is MSGNTLGLLFTVTTFGESHGPAIGAVVDGCPPGMALTEADIQGDLDRRRPGTSRHVTQRQEPDQVEILSGVFEGKTTGTPICLLIRNTDQRSKDYGNIVETFRPGHADYTYWQKYGIRDHRGGGRSSARLTAPVVAAGAVAKKWLREKYGTEIRGYMSQLGEIAVPFTDWSHVPENPFFAPNADIIPELETYMDALRRDGDSVGARIEVVASNVPVGLGEPLFDRLDADIAHAMMGINAVKGVEIGAGFDSVAQRGSVHGDELTAEGFRTNNSGGVLGGISTGQDVTVSLAIKPTSSIRTPRESIDKAGNAATVETFGRHDPCVGIRATPIAEAMLALVLIDHALRHRAQCGDVKVDTPRIPAQAGQTP.

The NADP(+) site is built by arginine 48 and arginine 54. Residues 125 to 127 (RSS), 238 to 239 (NA), glycine 278, 293 to 297 (KPTSS), and arginine 319 contribute to the FMN site.

Belongs to the chorismate synthase family. Homotetramer. It depends on FMNH2 as a cofactor.

It catalyses the reaction 5-O-(1-carboxyvinyl)-3-phosphoshikimate = chorismate + phosphate. It functions in the pathway metabolic intermediate biosynthesis; chorismate biosynthesis; chorismate from D-erythrose 4-phosphate and phosphoenolpyruvate: step 7/7. Functionally, catalyzes the anti-1,4-elimination of the C-3 phosphate and the C-6 proR hydrogen from 5-enolpyruvylshikimate-3-phosphate (EPSP) to yield chorismate, which is the branch point compound that serves as the starting substrate for the three terminal pathways of aromatic amino acid biosynthesis. This reaction introduces a second double bond into the aromatic ring system. The protein is Chorismate synthase of Cupriavidus necator (strain ATCC 17699 / DSM 428 / KCTC 22496 / NCIMB 10442 / H16 / Stanier 337) (Ralstonia eutropha).